Consider the following 448-residue polypeptide: Carbon catabolite repressor protein 4 homolog 3 (448 aa).

Over residues serine 50–serine 67 the composition is skewed to low complexity. Positions serine 50–arginine 92 are disordered. Glutamate 162 lines the Mg(2+) pocket.

The protein belongs to the CCR4/nocturin family. Component of the CCR4-NOT complex, at least composed of CRR4 and CAF1 proteins. Requires Mg(2+) as cofactor.

The protein resides in the nucleus. It localises to the cytoplasm. The enzyme catalyses Exonucleolytic cleavage of poly(A) to 5'-AMP.. Functionally, acts as a catalytic component of the CCR4-NOT core complex, which in the nucleus seems to be a general transcription factor, and in the cytoplasm the major mRNA deadenylase involved in mRNA turnover. The polypeptide is Carbon catabolite repressor protein 4 homolog 3 (CCR4-3) (Arabidopsis thaliana (Mouse-ear cress)).